Consider the following 361-residue polypeptide: Phosphoserine aminotransferase (361 aa).

An L-glutamate-binding site is contributed by R43. Pyridoxal 5'-phosphate-binding positions include 77–78, W103, T153, D173, and Q196; that span reads AS. The residue at position 197 (K197) is an N6-(pyridoxal phosphate)lysine. Residue 238–239 coordinates pyridoxal 5'-phosphate; sequence NT.

Belongs to the class-V pyridoxal-phosphate-dependent aminotransferase family. SerC subfamily. As to quaternary structure, homodimer. It depends on pyridoxal 5'-phosphate as a cofactor.

It localises to the cytoplasm. It carries out the reaction O-phospho-L-serine + 2-oxoglutarate = 3-phosphooxypyruvate + L-glutamate. The catalysed reaction is 4-(phosphooxy)-L-threonine + 2-oxoglutarate = (R)-3-hydroxy-2-oxo-4-phosphooxybutanoate + L-glutamate. It functions in the pathway amino-acid biosynthesis; L-serine biosynthesis; L-serine from 3-phospho-D-glycerate: step 2/3. The protein operates within cofactor biosynthesis; pyridoxine 5'-phosphate biosynthesis; pyridoxine 5'-phosphate from D-erythrose 4-phosphate: step 3/5. In terms of biological role, catalyzes the reversible conversion of 3-phosphohydroxypyruvate to phosphoserine and of 3-hydroxy-2-oxo-4-phosphonooxybutanoate to phosphohydroxythreonine. This is Phosphoserine aminotransferase from Pseudomonas entomophila (strain L48).